The following is a 200-amino-acid chain: dITP/XTP pyrophosphatase (200 aa).

19–24 provides a ligand contact to substrate; that stretch reads TSNAGK. Positions 49 and 78 each coordinate Mg(2+). Aspartate 78 acts as the Proton acceptor in catalysis. Substrate-binding positions include serine 79, 158–161, lysine 181, and 186–187; these read FGYD and HR.

The protein belongs to the HAM1 NTPase family. In terms of assembly, homodimer. Mg(2+) is required as a cofactor.

The catalysed reaction is XTP + H2O = XMP + diphosphate + H(+). It carries out the reaction dITP + H2O = dIMP + diphosphate + H(+). The enzyme catalyses ITP + H2O = IMP + diphosphate + H(+). Functionally, pyrophosphatase that catalyzes the hydrolysis of nucleoside triphosphates to their monophosphate derivatives, with a high preference for the non-canonical purine nucleotides XTP (xanthosine triphosphate), dITP (deoxyinosine triphosphate) and ITP. Seems to function as a house-cleaning enzyme that removes non-canonical purine nucleotides from the nucleotide pool, thus preventing their incorporation into DNA/RNA and avoiding chromosomal lesions. The sequence is that of dITP/XTP pyrophosphatase from Deinococcus radiodurans (strain ATCC 13939 / DSM 20539 / JCM 16871 / CCUG 27074 / LMG 4051 / NBRC 15346 / NCIMB 9279 / VKM B-1422 / R1).